Reading from the N-terminus, the 791-residue chain is uncharacterized protein (791 aa).

Residues 267–288 (APGESSAQSSYEQSTRAGDSAP) form a disordered region. The segment covering 271–283 (SSAQSSYEQSTRA) has biased composition (polar residues).

This is an uncharacterized protein from Treponema pallidum (strain Nichols).